We begin with the raw amino-acid sequence, 1058 residues long: DNA primase (1058 aa).

The segment at 988–1028 (CLRFKHGRASRATARTFVALSVGANNRLCVSLCQQCFAAKC) adopts a CHC2-type zinc-finger fold.

The protein belongs to the herpesviridae DNA primase family. As to quaternary structure, associates with the helicase and the primase-associated factor to form the helicase-primase factor.

It localises to the host nucleus. Its function is as follows. Essential component of the helicase/primase complex. Unwinds the DNA at the replication forks and generates single-stranded DNA for both leading and lagging strand synthesis. The primase initiates primer synthesis and thereby produces large amount of short RNA primers on the lagging strand that the polymerase elongates using dNTPs. This Homo sapiens (Human) protein is DNA primase.